Consider the following 451-residue polypeptide: Bifunctional protein GlmU (451 aa).

The tract at residues 1-225 (MVVVAILAAG…YQEILGINDR (225 aa)) is pyrophosphorylase. Residues 7-10 (LAAG), Lys-21, Gln-72, and 77-78 (GT) each bind UDP-N-acetyl-alpha-D-glucosamine. Asp-102 is a binding site for Mg(2+). Residues Gly-139, Glu-154, Asn-169, and Asn-223 each contribute to the UDP-N-acetyl-alpha-D-glucosamine site. Asn-223 contributes to the Mg(2+) binding site. Residues 226–246 (LQLATAYEILQRRVKEQWMMA) are linker. The segment at 247–451 (GVTLIDPNSI…PGWRKKSGES (205 aa)) is N-acetyltransferase. Arg-328 and Lys-346 together coordinate UDP-N-acetyl-alpha-D-glucosamine. His-358 serves as the catalytic Proton acceptor. 2 residues coordinate UDP-N-acetyl-alpha-D-glucosamine: Tyr-361 and Asn-372. Acetyl-CoA-binding positions include Ala-375, 381-382 (NY), Ser-400, Ala-418, and Arg-435.

This sequence in the N-terminal section; belongs to the N-acetylglucosamine-1-phosphate uridyltransferase family. It in the C-terminal section; belongs to the transferase hexapeptide repeat family. As to quaternary structure, homotrimer. The cofactor is Mg(2+).

It localises to the cytoplasm. It catalyses the reaction alpha-D-glucosamine 1-phosphate + acetyl-CoA = N-acetyl-alpha-D-glucosamine 1-phosphate + CoA + H(+). It carries out the reaction N-acetyl-alpha-D-glucosamine 1-phosphate + UTP + H(+) = UDP-N-acetyl-alpha-D-glucosamine + diphosphate. It functions in the pathway nucleotide-sugar biosynthesis; UDP-N-acetyl-alpha-D-glucosamine biosynthesis; N-acetyl-alpha-D-glucosamine 1-phosphate from alpha-D-glucosamine 6-phosphate (route II): step 2/2. Its pathway is nucleotide-sugar biosynthesis; UDP-N-acetyl-alpha-D-glucosamine biosynthesis; UDP-N-acetyl-alpha-D-glucosamine from N-acetyl-alpha-D-glucosamine 1-phosphate: step 1/1. It participates in bacterial outer membrane biogenesis; LPS lipid A biosynthesis. Its function is as follows. Catalyzes the last two sequential reactions in the de novo biosynthetic pathway for UDP-N-acetylglucosamine (UDP-GlcNAc). The C-terminal domain catalyzes the transfer of acetyl group from acetyl coenzyme A to glucosamine-1-phosphate (GlcN-1-P) to produce N-acetylglucosamine-1-phosphate (GlcNAc-1-P), which is converted into UDP-GlcNAc by the transfer of uridine 5-monophosphate (from uridine 5-triphosphate), a reaction catalyzed by the N-terminal domain. This chain is Bifunctional protein GlmU, found in Trichormus variabilis (strain ATCC 29413 / PCC 7937) (Anabaena variabilis).